A 530-amino-acid polypeptide reads, in one-letter code: Phosphoenolpyruvate carboxykinase (ATP) (530 aa).

3 residues coordinate substrate: Arg58, Tyr195, and Lys201. Residues Lys201, His220, and 236-244 (GLSGTGKTT) contribute to the ATP site. 2 residues coordinate Mn(2+): Lys201 and His220. Mn(2+) is bound at residue Asp257. ATP contacts are provided by residues Glu285, Arg321, 440–441 (RI), and Thr446. A substrate-binding site is contributed by Arg321.

It belongs to the phosphoenolpyruvate carboxykinase (ATP) family. It depends on Mn(2+) as a cofactor.

The protein resides in the cytoplasm. The enzyme catalyses oxaloacetate + ATP = phosphoenolpyruvate + ADP + CO2. Its pathway is carbohydrate biosynthesis; gluconeogenesis. Involved in the gluconeogenesis. Catalyzes the conversion of oxaloacetate (OAA) to phosphoenolpyruvate (PEP) through direct phosphoryl transfer between the nucleoside triphosphate and OAA. The sequence is that of Phosphoenolpyruvate carboxykinase (ATP) from Staphylococcus aureus (strain MRSA252).